The primary structure comprises 353 residues: Ig alpha-1 chain C region (353 aa).

The 93-residue stretch at 6–98 (PKVFPLSLCS…HYTNPSQDVT (93 aa)) folds into the Ig-like 1 domain. 2 disulfides stabilise this stretch: cysteine 26-cysteine 85 and cysteine 77-cysteine 101. Residues 96 to 121 (DVTVPCRVPSTPPTPSPSTPPTPSPP) form a disordered region. Pro residues predominate over residues 105–121 (STPPTPSPSTPPTPSPP). Disulfide bonds link cysteine 123–cysteine 180, cysteine 147–cysteine 204, and cysteine 250–cysteine 313. 2 consecutive Ig-like domains span residues 125-220 (PRLS…ATLS) and 228-330 (PEVH…KTID). The N-linked (GlcNAc...) asparagine glycan is linked to asparagine 144. Residue asparagine 340 is glycosylated (N-linked (GlcNAc...) asparagine). A 3-hydroxy-L-kynurenine-binding site is contributed by cysteine 352.

Monomeric or polymeric. 3-Hydroxykynurenine, an oxidized tryptophan metabolite that is common in biological fluids, reacts with alpha-1-microglobulin to form heterogeneous polycyclic chromophores including hydroxanthommatin. The chromophore reacts with accessible cysteines forming non-reducible thioether cross-links with Ig alpha-1 chain C region Cys-352.

Functionally, ig alpha is the major immunoglobulin class in body secretions. It may serve both to defend against local infection and to prevent access of foreign antigens to the general immunologic system. This Gorilla gorilla gorilla (Western lowland gorilla) protein is Ig alpha-1 chain C region (IGHA1).